The chain runs to 124 residues: Nucleoid-associated protein Noca_0318 (124 aa).

The protein belongs to the YbaB/EbfC family. As to quaternary structure, homodimer.

It is found in the cytoplasm. The protein localises to the nucleoid. In terms of biological role, binds to DNA and alters its conformation. May be involved in regulation of gene expression, nucleoid organization and DNA protection. This Nocardioides sp. (strain ATCC BAA-499 / JS614) protein is Nucleoid-associated protein Noca_0318.